A 710-amino-acid polypeptide reads, in one-letter code: Polyribonucleotide nucleotidyltransferase (710 aa).

The Mg(2+) site is built by Asp487 and Asp493. One can recognise a KH domain in the interval 554 to 613 (PRIHTMKISAEKIKDVIGKGGAVIRALTEETGTTIEIEDDGTIKIAATEGAAAKEAIRRI). Residues 623–691 (GRIYTGKVAR…RQGRVRLSMK (69 aa)) enclose the S1 motif domain. The interval 691–710 (KEAVEKPAEEANDASEAKGE) is disordered.

Belongs to the polyribonucleotide nucleotidyltransferase family. As to quaternary structure, component of the RNA degradosome, which is a multiprotein complex involved in RNA processing and mRNA degradation. Mg(2+) is required as a cofactor.

Its subcellular location is the cytoplasm. The enzyme catalyses RNA(n+1) + phosphate = RNA(n) + a ribonucleoside 5'-diphosphate. Involved in mRNA degradation. Catalyzes the phosphorolysis of single-stranded polyribonucleotides processively in the 3'- to 5'-direction. This is Polyribonucleotide nucleotidyltransferase from Vibrio campbellii (strain ATCC BAA-1116).